Reading from the N-terminus, the 280-residue chain is Putative pyruvate, phosphate dikinase regulatory protein (280 aa).

149-156 is a binding site for ADP; sequence GVSRSSKT.

It belongs to the pyruvate, phosphate/water dikinase regulatory protein family. PDRP subfamily.

The enzyme catalyses N(tele)-phospho-L-histidyl/L-threonyl-[pyruvate, phosphate dikinase] + ADP = N(tele)-phospho-L-histidyl/O-phospho-L-threonyl-[pyruvate, phosphate dikinase] + AMP + H(+). The catalysed reaction is N(tele)-phospho-L-histidyl/O-phospho-L-threonyl-[pyruvate, phosphate dikinase] + phosphate + H(+) = N(tele)-phospho-L-histidyl/L-threonyl-[pyruvate, phosphate dikinase] + diphosphate. In terms of biological role, bifunctional serine/threonine kinase and phosphorylase involved in the regulation of the pyruvate, phosphate dikinase (PPDK) by catalyzing its phosphorylation/dephosphorylation. This Novosphingobium aromaticivorans (strain ATCC 700278 / DSM 12444 / CCUG 56034 / CIP 105152 / NBRC 16084 / F199) protein is Putative pyruvate, phosphate dikinase regulatory protein.